Here is a 286-residue protein sequence, read N- to C-terminus: uncharacterized protein (286 aa).

The Radical SAM core domain occupies 2-221 (VDGMKHLILK…PIYIKNLQKR (220 aa)). [4Fe-4S] cluster-binding residues include Cys-16, Cys-20, and Cys-23.

It belongs to the radical SAM superfamily. Anaerobic sulfatase-maturating enzyme family. Requires [4Fe-4S] cluster as cofactor.

This is an uncharacterized protein from Methanocaldococcus jannaschii (strain ATCC 43067 / DSM 2661 / JAL-1 / JCM 10045 / NBRC 100440) (Methanococcus jannaschii).